The chain runs to 120 residues: Putative iron-sulfur cluster insertion protein ErpA (120 aa).

Iron-sulfur cluster contacts are provided by C49, C113, and C115.

The protein belongs to the HesB/IscA family. Homodimer. The cofactor is iron-sulfur cluster.

Functionally, required for insertion of 4Fe-4S clusters. This is Putative iron-sulfur cluster insertion protein ErpA from Albidiferax ferrireducens (strain ATCC BAA-621 / DSM 15236 / T118) (Rhodoferax ferrireducens).